The sequence spans 620 residues: Chaperone protein HscA homolog (620 aa).

This sequence belongs to the heat shock protein 70 family.

Functionally, chaperone involved in the maturation of iron-sulfur cluster-containing proteins. Has a low intrinsic ATPase activity which is markedly stimulated by HscB. This is Chaperone protein HscA homolog from Bordetella pertussis (strain Tohama I / ATCC BAA-589 / NCTC 13251).